Here is a 421-residue protein sequence, read N- to C-terminus: MTKDIAQVMAEVGRKAKAAAAPLSIATSEQKNKALNAAADAILEARADILEANRLDLANAEKNGMAASFVDRLTLNEARIDAIAEDIRAIATLPDPVGEVIAEWDRPNGLHIERVRTPLGVIGVIYESRPNVTADAGALCLKAGNAVILRGGSDSAHSSAAIHKALVKGLEAANLPADAIQIVPVTDRAAVGEMLKGLGGAIDVIVPRGGKSLVARVQSEARVPVFAHLEGICHLYIDKSADLDMARRIALDAKMRRTGICGAAETLLVDRAVASTHLAPILGDLAAGGCEIRGSAEVLALYPAAKPATEEDWSTEYLDAIISVALVDGISGAIDHINRYSSHHTEAIVAEDAQTVARFFNEIDSAILLHNASTQFADGGEFGMGAEIGIATGKMHARGPVGVEQLTSFKYRVRGSGQVRG.

This sequence belongs to the gamma-glutamyl phosphate reductase family.

The protein resides in the cytoplasm. The catalysed reaction is L-glutamate 5-semialdehyde + phosphate + NADP(+) = L-glutamyl 5-phosphate + NADPH + H(+). Its pathway is amino-acid biosynthesis; L-proline biosynthesis; L-glutamate 5-semialdehyde from L-glutamate: step 2/2. Catalyzes the NADPH-dependent reduction of L-glutamate 5-phosphate into L-glutamate 5-semialdehyde and phosphate. The product spontaneously undergoes cyclization to form 1-pyrroline-5-carboxylate. The polypeptide is Gamma-glutamyl phosphate reductase (Brucella suis biovar 1 (strain 1330)).